A 263-amino-acid chain; its full sequence is MNDNFKKQPHHLIYEELLQQGITLGITTRGDGLSDYPKNAFNMARYIDDCPYNITQHQLQLAEEIAFDRKNWVFPIQTHENKVACITKDDIGTNIDTLTDALHGIDAMYTYDSNVLLTMCYADCVPVYFYSTKHHFIALAHAGWRGTYTEIVKEVLKHVNFDLKDLHVVIGPSTSSSYEINDDIKNKFETLPIDSANYIETRGRDRHGIDLKKANAALLNNYGVPKENIYTTAYATSEHLELFFSYRLEKGQTGRMLAFIGQQ.

Positions 79, 124, and 141 each coordinate Zn(2+).

It belongs to the purine nucleoside phosphorylase YfiH/LACC1 family. As to quaternary structure, homodimer. Cu(2+) serves as cofactor. Zn(2+) is required as a cofactor.

The catalysed reaction is adenosine + phosphate = alpha-D-ribose 1-phosphate + adenine. The enzyme catalyses S-methyl-5'-thioadenosine + phosphate = 5-(methylsulfanyl)-alpha-D-ribose 1-phosphate + adenine. It carries out the reaction inosine + phosphate = alpha-D-ribose 1-phosphate + hypoxanthine. It catalyses the reaction adenosine + H2O + H(+) = inosine + NH4(+). Purine nucleoside enzyme that catalyzes the phosphorolysis of adenosine and inosine nucleosides, yielding D-ribose 1-phosphate and the respective free bases, adenine and hypoxanthine. Also catalyzes the phosphorolysis of S-methyl-5'-thioadenosine into adenine and S-methyl-5-thio-alpha-D-ribose 1-phosphate. Also has adenosine deaminase activity. The protein is Purine nucleoside phosphorylase SAR1163 of Staphylococcus aureus (strain MRSA252).